The chain runs to 313 residues: Phenylalanine-4-hydroxylase (313 aa).

Positions 154, 159, and 200 each coordinate Fe cation.

It belongs to the biopterin-dependent aromatic amino acid hydroxylase family. Requires Fe(2+) as cofactor.

It catalyses the reaction (6R)-L-erythro-5,6,7,8-tetrahydrobiopterin + L-phenylalanine + O2 = (4aS,6R)-4a-hydroxy-L-erythro-5,6,7,8-tetrahydrobiopterin + L-tyrosine. It participates in amino-acid degradation; L-phenylalanine degradation; acetoacetate and fumarate from L-phenylalanine: step 1/6. This chain is Phenylalanine-4-hydroxylase (phhA), found in Ralstonia nicotianae (strain ATCC BAA-1114 / GMI1000) (Ralstonia solanacearum).